Here is a 452-residue protein sequence, read N- to C-terminus: Probable diguanylate cyclase DgcT (452 aa).

Residues M1 to R7 are Cytoplasmic-facing. The chain crosses the membrane as a helical span at residues I8–W28. The Periplasmic portion of the chain corresponds to F29–M45. Residues V46–I66 traverse the membrane as a helical segment. The Cytoplasmic segment spans residues Y67–N74. A helical membrane pass occupies residues C75–I95. Residues Q96–D111 lie on the Periplasmic side of the membrane. A helical membrane pass occupies residues I112 to V132. Residues N133–K148 are Cytoplasmic-facing. Residues M149–S169 form a helical membrane-spanning segment. Topologically, residues S170 to Y195 are periplasmic. Residues V196–L216 traverse the membrane as a helical segment. At R217 to D219 the chain is on the cytoplasmic side. Residues I220–F240 traverse the membrane as a helical segment. The Periplasmic segment spans residues M241 to T254. Residues I255–L275 form a helical membrane-spanning segment. Topologically, residues R276–P452 are cytoplasmic. The GGDEF domain maps to T310–V445. Residues D318 and I319 each contribute to the Mg(2+) site. N326, H331, and D335 together coordinate substrate. E361 contacts Mg(2+). E361 acts as the Proton acceptor in catalysis. R381 is a binding site for substrate.

As to quaternary structure, homodimer. It depends on Mg(2+) as a cofactor.

The protein localises to the cell inner membrane. It carries out the reaction 2 GTP = 3',3'-c-di-GMP + 2 diphosphate. It functions in the pathway purine metabolism; 3',5'-cyclic di-GMP biosynthesis. Probably catalyzes the synthesis of cyclic-di-GMP (c-di-GMP) via the condensation of 2 GTP molecules. Overexpression leads to a strong repression of swimming; swimming returns to normal when residues 359-360 are both mutated to Ala. Overexpression also leads to a 20-fold increase in c-di-GMP levels in vivo. Cyclic-di-GMP is a second messenger which controls cell surface-associated traits in bacteria. This is Probable diguanylate cyclase DgcT from Escherichia coli (strain K12).